Here is a 449-residue protein sequence, read N- to C-terminus: Transcription factor AP-2 gamma (449 aa).

K10 is covalently cross-linked (Glycyl lysine isopeptide (Lys-Gly) (interchain with G-Cter in SUMO)). A disordered region spans residues 13–58 (EDCEDRHDSSSNGNPRIPHLSSPGQHLYSPAPPLSHTGVAEYQPPP). The short motif at 59–64 (YFPPPY) is the PPxY motif element. The segment at 94–130 (AATGSQQQAWPGRQSQEGSSLASHHSRSASLIPHISG) is disordered. A compositionally biased stretch (polar residues) spans 95–111 (ATGSQQQAWPGRQSQEG). Positions 112-124 (SSLASHHSRSASL) are enriched in low complexity. The residue at position 251 (S251) is a Phosphoserine; by PKA. Positions 292–423 (RRKAAHVTLL…YIKEALIAID (132 aa)) are H-S-H (helix-span-helix), dimerization. A disordered region spans residues 426-449 (YMNPGDQSPADSSKTMEKMEKHRK). Residue S433 is modified to Phosphoserine. Basic and acidic residues predominate over residues 439 to 449 (KTMEKMEKHRK).

Belongs to the AP-2 family. Binds DNA as a dimer. Can form homodimers or heterodimers with other AP-2 family members. Interacts with WWOX. Interacts with UBE2I. Interacts with KCTD1; this interaction represses transcription activation. Interacts with CITED2 (via C-terminus); the interaction stimulates TFAP2B-transcriptional activity. Interacts with CITED4. Interacts with MTA1. Post-translationally, sumoylated on Lys-10; which inhibits transcriptional activity. As to expression, expressed in lung, ovary and testis. Expressed in most squamous epithelia. Also, detected in several exocrine glands including the prostate, the preputial and salivary glands, serous glands of the tongue and ocular harderian glands.

The protein localises to the nucleus. Its function is as follows. Sequence-specific DNA-binding transcription factor that interacts with cellular enhancer elements to regulate transcription of selected genes, and which plays a key role in early embryonic development. AP-2 factors bind to the consensus sequence 5'-GCCNNNGGC-3' and activate genes involved in a large spectrum of important biological functions. TFAP2C plays a key role in early embryonic development by regulating both inner cell mass (ICM) and trophectoderm differentiation. At the 8-cell stage, during morula development, controls expression of cell-polarity genes. Upon trophoblast commitment, binds to late trophectoderm genes in blastocysts together with CDX2, and later to extra-embryonic ectoderm genes together with SOX2. Binds to both closed and open chromatin with other transcription factors. The chain is Transcription factor AP-2 gamma from Mus musculus (Mouse).